The primary structure comprises 442 residues: 3-phosphoshikimate 1-carboxyvinyltransferase (442 aa).

Residues Lys25, Ser26, and Arg30 each contribute to the 3-phosphoshikimate site. Lys25 is a binding site for phosphoenolpyruvate. Residues Gly97 and Arg125 each contribute to the phosphoenolpyruvate site. 4 residues coordinate 3-phosphoshikimate: Ser170, Gln172, Asp323, and Lys350. Phosphoenolpyruvate is bound at residue Gln172. Asp323 serves as the catalytic Proton acceptor. Phosphoenolpyruvate-binding residues include Arg354 and Arg399.

Belongs to the EPSP synthase family. In terms of assembly, monomer.

Its subcellular location is the cytoplasm. It catalyses the reaction 3-phosphoshikimate + phosphoenolpyruvate = 5-O-(1-carboxyvinyl)-3-phosphoshikimate + phosphate. The protein operates within metabolic intermediate biosynthesis; chorismate biosynthesis; chorismate from D-erythrose 4-phosphate and phosphoenolpyruvate: step 6/7. Its function is as follows. Catalyzes the transfer of the enolpyruvyl moiety of phosphoenolpyruvate (PEP) to the 5-hydroxyl of shikimate-3-phosphate (S3P) to produce enolpyruvyl shikimate-3-phosphate and inorganic phosphate. In Bartonella quintana (strain Toulouse) (Rochalimaea quintana), this protein is 3-phosphoshikimate 1-carboxyvinyltransferase.